A 1116-amino-acid polypeptide reads, in one-letter code: Phosphatidylinositol 4-kinase beta 2 (1116 aa).

Residues 1 to 143 (MQMAQFLSLV…SRIQEKCQIA (143 aa)) form the PIK helical domain. Tandem repeats lie at residues 210 to 229 (ADDN…RDAL), 242 to 261 (CEKD…EDDE), 264 to 283 (SNSE…EEEE), 286 to 304 (NNSE…DEEE), 307 to 326 (SSSD…DEEE), 329 to 348 (ANSE…EDEE), 351 to 370 (ANTE…EDDK), and 378 to 396 (EEKD…DEKR). Residues 210–507 (ADDNKIFKRL…FRDRDRSVED (298 aa)) form an 11 X 20 AA approximate repeats (PPC) region. Residues 394–404 (EKRNGNERNET) are compositionally biased toward basic and acidic residues. A disordered region spans residues 394–417 (EKRNGNERNETDETVYTDETSGED). Positions 405–415 (DETVYTDETSG) are enriched in acidic residues. Copy 9 of the repeat occupies 418–436 (NGREGFFKKLFKEKFEDKP). 2 positions are modified to phosphoserine: serine 447 and serine 452. 2 tandem repeats follow at residues 452–470 (SSEF…EDVK) and 488–507 (PGTE…SVED). Disordered regions lie at residues 515–540 (KYKE…LPNN) and 794–813 (GEAP…SDAQ). Positions 830 to 1101 (EFWEGKRLRI…LISSSLDAWR (272 aa)) constitute a PI3K/PI4K catalytic domain. The G-loop stretch occupies residues 836-842 (RLRIRKD). The interval 964-972 (QIKDRHNGN) is catalytic loop. The segment at 983–1007 (HIDFGFMLSNSPGGVNFESAPFKLT) is activation loop.

This sequence belongs to the PI3/PI4-kinase family. Type III PI4K subfamily.

The protein localises to the cell membrane. It is found in the golgi apparatus. It localises to the trans-Golgi network. The protein resides in the cytoplasmic vesicle membrane. The enzyme catalyses a 1,2-diacyl-sn-glycero-3-phospho-(1D-myo-inositol) + ATP = a 1,2-diacyl-sn-glycero-3-phospho-(1D-myo-inositol 4-phosphate) + ADP + H(+). Acts on phosphatidylinositol (PtdIns) in the first committed step in the production of the second messenger inositol-1,4,5-trisphosphate. Necessary for proper organization of the trans-Golgi network (TGN) and post-Golgi secretion in root hairs. Together with PI4KB1, required during polarized root hair expansion and pollen tube elongation. Functions redundantly with PI4KB1 upstream of the cold response phosphoinositide-dependent phospholipase C (PI-PLC) pathway. The polypeptide is Phosphatidylinositol 4-kinase beta 2 (PI4KB2) (Arabidopsis thaliana (Mouse-ear cress)).